Here is a 375-residue protein sequence, read N- to C-terminus: Alanine racemase (375 aa).

K41 functions as the Proton acceptor; specific for D-alanine in the catalytic mechanism. N6-(pyridoxal phosphate)lysine is present on K41. Position 141 (R141) interacts with substrate. Residue Y270 is the Proton acceptor; specific for L-alanine of the active site. Position 317 (M317) interacts with substrate.

This sequence belongs to the alanine racemase family. Requires pyridoxal 5'-phosphate as cofactor.

The enzyme catalyses L-alanine = D-alanine. It participates in amino-acid biosynthesis; D-alanine biosynthesis; D-alanine from L-alanine: step 1/1. Functionally, catalyzes the interconversion of L-alanine and D-alanine. May also act on other amino acids. The protein is Alanine racemase (alr) of Lactiplantibacillus plantarum (strain ATCC BAA-793 / NCIMB 8826 / WCFS1) (Lactobacillus plantarum).